Consider the following 326-residue polypeptide: L-lactate dehydrogenase (326 aa).

Residues Val20, Asp41, Lys46, Tyr71, and 85-86 (GA) contribute to the NAD(+) site. Gln88 and Arg94 together coordinate substrate. Residues Ser107, 124–126 (AAN), and Ser149 contribute to the NAD(+) site. 126-129 (NPVD) is a substrate binding site. 154–157 (DTAR) provides a ligand contact to substrate. Beta-D-fructose 1,6-bisphosphate-binding positions include Arg159, 171–174 (RSVH), and His174. Catalysis depends on His181, which acts as the Proton acceptor. Tyr226 is modified (phosphotyrosine). Residue Thr235 coordinates substrate.

This sequence belongs to the LDH/MDH superfamily. LDH family. Homotetramer.

The protein resides in the cytoplasm. The catalysed reaction is (S)-lactate + NAD(+) = pyruvate + NADH + H(+). It participates in fermentation; pyruvate fermentation to lactate; (S)-lactate from pyruvate: step 1/1. Allosterically activated by fructose 1,6-bisphosphate (FBP) alone under acidic conditions, while it requires additional activation factors such as divalent cations (Mn(2+)) under neutral conditions. Under acidic conditions, Mn(2+) is an inhibitor in the absence of fructose 1,6-bisphosphate (FBP). In case of L.casei, L-LDH binds four fructose 1,6-bisphosphate (FBP) molecules per tetramer, while usual allosteric L-LDH binds only two fructose 1,6-bisphosphate (FBP) molecules per tetramer. In terms of biological role, catalyzes the conversion of lactate to pyruvate. The chain is L-lactate dehydrogenase from Lacticaseibacillus casei (Lactobacillus casei).